A 236-amino-acid polypeptide reads, in one-letter code: NAD(P)H-hydrate epimerase (236 aa).

Residues 11–217 (AAALDRELMS…SIAKKYDFDV (207 aa)) form the YjeF N-terminal domain. 61 to 65 (NNGGD) lines the (6S)-NADPHX pocket. K(+) is bound by residues N62 and D123. Residues 127–133 (GFSFSGE) and D156 contribute to the (6S)-NADPHX site. Residue S159 coordinates K(+).

This sequence belongs to the NnrE/AIBP family. The cofactor is K(+).

It is found in the cytoplasm. It localises to the mitochondrion. The catalysed reaction is (6R)-NADHX = (6S)-NADHX. The enzyme catalyses (6R)-NADPHX = (6S)-NADPHX. Functionally, catalyzes the epimerization of the S- and R-forms of NAD(P)HX, a damaged form of NAD(P)H that is a result of enzymatic or heat-dependent hydration. This is a prerequisite for the S-specific NAD(P)H-hydrate dehydratase to allow the repair of both epimers of NAD(P)HX. The sequence is that of NAD(P)H-hydrate epimerase from Neurospora crassa (strain ATCC 24698 / 74-OR23-1A / CBS 708.71 / DSM 1257 / FGSC 987).